Here is a 296-residue protein sequence, read N- to C-terminus: Uricase (296 aa).

Catalysis depends on charge relay system residues K14 and T61. 7 residues coordinate urate: T61, D62, F163, R180, V229, Q230, and N256. Catalysis depends on H258, which acts as the Charge relay system.

This sequence belongs to the uricase family.

It localises to the peroxisome. It is found in the cytoplasm. The protein resides in the nucleus. The catalysed reaction is urate + O2 + H2O = 5-hydroxyisourate + H2O2. It functions in the pathway purine metabolism; urate degradation; (S)-allantoin from urate: step 1/3. Functionally, catalyzes the oxidation of uric acid to 5-hydroxyisourate, which is further processed to form (S)-allantoin. The polypeptide is Uricase (Schizosaccharomyces pombe (strain 972 / ATCC 24843) (Fission yeast)).